Consider the following 673-residue polypeptide: DNA ligase (673 aa).

NAD(+) contacts are provided by residues 33-37 (DAEYD), 82-83 (SL), and E114. The N6-AMP-lysine intermediate role is filled by K116. Residues R137, E174, K291, and K315 each contribute to the NAD(+) site. Positions 409, 412, 427, and 433 each coordinate Zn(2+). The BRCT domain maps to 592–673 (AQEQPLAGLV…LINLLEQHNG (82 aa)).

It belongs to the NAD-dependent DNA ligase family. LigA subfamily. The cofactor is Mg(2+). It depends on Mn(2+) as a cofactor.

The enzyme catalyses NAD(+) + (deoxyribonucleotide)n-3'-hydroxyl + 5'-phospho-(deoxyribonucleotide)m = (deoxyribonucleotide)n+m + AMP + beta-nicotinamide D-nucleotide.. Functionally, DNA ligase that catalyzes the formation of phosphodiester linkages between 5'-phosphoryl and 3'-hydroxyl groups in double-stranded DNA using NAD as a coenzyme and as the energy source for the reaction. It is essential for DNA replication and repair of damaged DNA. The chain is DNA ligase from Pseudoalteromonas translucida (strain TAC 125).